We begin with the raw amino-acid sequence, 61 residues long: Small ribosomal subunit protein uS14 (61 aa).

Zn(2+)-binding residues include C24, C27, C40, and C43.

This sequence belongs to the universal ribosomal protein uS14 family. Zinc-binding uS14 subfamily. Part of the 30S ribosomal subunit. Contacts proteins S3 and S10. Requires Zn(2+) as cofactor.

In terms of biological role, binds 16S rRNA, required for the assembly of 30S particles and may also be responsible for determining the conformation of the 16S rRNA at the A site. This Geobacter sp. (strain M21) protein is Small ribosomal subunit protein uS14.